We begin with the raw amino-acid sequence, 304 residues long: Protein YIF1B (304 aa).

Residues 1–146 (MMEYPNQSGF…APRFDINAPD (146 aa)) lie on the Cytoplasmic side of the membrane. Residues 21–54 (MRGSAMEPSDPTQLFDDTSSGVNKHEPGRVGKSP) form a disordered region. Polar residues predominate over residues 30 to 42 (DPTQLFDDTSSGV). Residues 147 to 167 (LYIPVMGFITYVLVAGLALGT) traverse the membrane as a helical segment. Topologically, residues 168–182 (QNRFSPEILGIQASS) are extracellular. The chain crosses the membrane as a helical span at residues 183 to 203 (ALVWLIIEVLAVLLSLYLVTV). Residues 204-212 (NTDLTTIDL) are Cytoplasmic-facing. The chain crosses the membrane as a helical span at residues 213–233 (VAFSGYKYVGMIVGVVAGLLF). The Extracellular segment spans residues 234-236 (GRT). A helical membrane pass occupies residues 237–257 (GYYLALLWFCASIFVFTIRTL). At 258-282 (RLKILSEAAAEGRLVRGTKNQLRMY) the chain is on the cytoplasmic side. A helical membrane pass occupies residues 283–303 (LTMAIAAAQPVFMYWLTFHLV). Position 304 (R304) is a topological domain, extracellular.

The protein belongs to the YIF1 family.

It is found in the endoplasmic reticulum membrane. The protein resides in the golgi apparatus membrane. Its subcellular location is the endoplasmic reticulum-Golgi intermediate compartment membrane. Its function is as follows. Functions in endoplasmic reticulum to Golgi vesicle-mediated transport and regulates the proper organization of the endoplasmic reticulum and the Golgi. Plays a key role in targeting to neuronal dendrites receptors such as HTR1A. Plays also a role in primary cilium and sperm flagellum assembly probably through protein transport to these compartments. The polypeptide is Protein YIF1B (yif1b) (Danio rerio (Zebrafish)).